A 368-amino-acid chain; its full sequence is Peptide chain release factor 2 (368 aa).

The residue at position 250 (Gln-250) is an N5-methylglutamine.

It belongs to the prokaryotic/mitochondrial release factor family. Post-translationally, methylated by PrmC. Methylation increases the termination efficiency of RF2.

It is found in the cytoplasm. In terms of biological role, peptide chain release factor 2 directs the termination of translation in response to the peptide chain termination codons UGA and UAA. The chain is Peptide chain release factor 2 from Chlamydia trachomatis serovar L2 (strain ATCC VR-902B / DSM 19102 / 434/Bu).